The chain runs to 531 residues: SWI/SNF-related matrix-associated actin-dependent regulator of chromatin subfamily D member 2 (531 aa).

The tract at residues 20-85 (AVAAALGAPP…MSPGSRMPMA (66 aa)) is disordered. Positions 34–45 (PGMLPSPALRGP) are enriched in low complexity. Arginine 81 and arginine 104 each carry asymmetric dimethylarginine. The residue at position 203 (serine 203) is a Phosphoserine. Residues 205 to 226 (SKADGDNAGTAGTPGGTPAADK) are disordered. Low complexity predominate over residues 210–225 (DNAGTAGTPGGTPAAD). At threonine 217 the chain carries Phosphothreonine. Lysine 226 is covalently cross-linked (Glycyl lysine isopeptide (Lys-Gly) (interchain with G-Cter in SUMO2)). Residues 306–383 (HQPPQYKLDP…PMKLAGLLQH (78 aa)) enclose the SWIB/MDM2 domain.

Belongs to the SMARCD family. As to quaternary structure, component of the multiprotein chromatin-remodeling complexes SWI/SNF: SWI/SNF-A (BAF), SWI/SNF-B (PBAF) and related complexes. The canonical complex contains a catalytic subunit (either SMARCA4/BRG1/BAF190A or SMARCA2/BRM/BAF190B), and at least SMARCE1, ACTL6A/BAF53, SMARCC1/BAF155, SMARCC2/BAF170, and SMARCB1/SNF5/BAF47. Other subunits specific to each of the complexes may also be present permitting several possible combinations developmentally and tissue specific. Component of the BAF complex, which includes at least actin (ACTB), ARID1A/BAF250A, ARID1B/BAF250B, SMARCA2/BRM, SMARCA4/BRG1, ACTL6A/BAF53, ACTL6B/BAF53B, SMARCE1/BAF57, SMARCC1/BAF155, SMARCC2/BAF170, SMARCB1/SNF5/INI1, and one or more SMARCD1/BAF60A, SMARCD2/BAF60B, or SMARCD3/BAF60C. In muscle cells, the BAF complex also contains DPF3. Component of the SWI/SNF-B (PBAF) chromatin remodeling complex, at least composed of SMARCA4/BRG1, SMARCB1/BAF47/SNF5, ACTL6A/BAF53A or ACTL6B/BAF53B, SMARCE1/BAF57, SMARCD1/BAF60A, SMARCD2/BAF60B, perhaps SMARCD3/BAF60C, SMARCC1/BAF155, SMARCC2/BAF170, PBRM1/BAF180, ARID2/BAF200 and actin (ACTB). Interacts with UNKL. Interacts with CEBPE. Post-translationally, ubiquitinated through a signaling process involving RAC1 and the RING finger protein UNKL.

It is found in the nucleus. Its function is as follows. Involved in transcriptional activation and repression of select genes by chromatin remodeling (alteration of DNA-nucleosome topology). Component of SWI/SNF chromatin remodeling complexes that carry out key enzymatic activities, changing chromatin structure by altering DNA-histone contacts within a nucleosome in an ATP-dependent manner. Critical regulator of myeloid differentiation, controlling granulocytopoiesis and the expression of genes involved in neutrophil granule formation. The sequence is that of SWI/SNF-related matrix-associated actin-dependent regulator of chromatin subfamily D member 2 (Smarcd2) from Mus musculus (Mouse).